The chain runs to 294 residues: Nucleotide-binding protein LVIS_0651 (294 aa).

Gly-12–Thr-19 serves as a coordination point for ATP. Residue Asp-62–Ser-65 coordinates GTP.

This sequence belongs to the RapZ-like family.

In terms of biological role, displays ATPase and GTPase activities. This Levilactobacillus brevis (strain ATCC 367 / BCRC 12310 / CIP 105137 / JCM 1170 / LMG 11437 / NCIMB 947 / NCTC 947) (Lactobacillus brevis) protein is Nucleotide-binding protein LVIS_0651.